The primary structure comprises 246 residues: Ribonuclease 3 (246 aa).

The region spanning 16–144 (LLEFQKQAGL…VIGAYYIDSG (129 aa)) is the RNase III domain. Residue Glu57 participates in Mg(2+) binding. Asp61 is an active-site residue. The Mg(2+) site is built by Asp130 and Glu133. Residue Glu133 is part of the active site. In terms of domain architecture, DRBM spans 171–240 (DYKSLLQELV…AKVAYENLCS (70 aa)).

It belongs to the ribonuclease III family. As to quaternary structure, homodimer. Requires Mg(2+) as cofactor.

Its subcellular location is the cytoplasm. It carries out the reaction Endonucleolytic cleavage to 5'-phosphomonoester.. Functionally, digests double-stranded RNA. Involved in the processing of primary rRNA transcript to yield the immediate precursors to the large and small rRNAs (23S and 16S). Processes some mRNAs, and tRNAs when they are encoded in the rRNA operon. Processes pre-crRNA and tracrRNA of type II CRISPR loci if present in the organism. The sequence is that of Ribonuclease 3 from Treponema denticola (strain ATCC 35405 / DSM 14222 / CIP 103919 / JCM 8153 / KCTC 15104).